The primary structure comprises 176 residues: Nuclear ribonuclease Z (176 aa).

Belongs to the RNase Z family. Homodimer. Zn(2+) is required as a cofactor.

The protein resides in the nucleus. The catalysed reaction is Endonucleolytic cleavage of RNA, removing extra 3' nucleotides from tRNA precursor, generating 3' termini of tRNAs. A 3'-hydroxy group is left at the tRNA terminus and a 5'-phosphoryl group is left at the trailer molecule.. Zinc phosphodiesterase, which displays some tRNA 3'-processing endonuclease activity. Probably involved in tRNA maturation, by removing a 3'-trailer from precursor tRNA. This chain is Nuclear ribonuclease Z (ELAC), found in Triticum aestivum (Wheat).